Here is a 1311-residue protein sequence, read N- to C-terminus: Mitogen-activated protein kinase kinase kinase 19 (1311 aa).

Disordered regions lie at residues 85 to 119 (PDPL…SPPD), 250 to 274 (PLSQ…PVEH), 330 to 363 (SVKE…YLSS), 396 to 472 (MTPA…NPEM), 486 to 508 (EGTS…PAQN), 576 to 607 (HRPH…KQAF), and 734 to 767 (SKDK…FLSS). The span at 250 to 261 (PLSQSAEFSSSK) shows a compositional bias: polar residues. Basic and acidic residues-rich tracts occupy residues 262–274 (NHQE…PVEH), 330–345 (SVKE…RDSG), and 450–464 (LEGH…KIPM). The segment covering 734-748 (SKDKGCKDMGGHTED) has biased composition (basic and acidic residues). Residues 1044 to 1307 (WTKGEILGRG…ALQLLKHSFL (264 aa)) form the Protein kinase domain. ATP is bound by residues 1050 to 1058 (LGRGAYGTV) and Lys1072. Asp1169 (proton acceptor) is an active-site residue.

The protein belongs to the protein kinase superfamily. STE Ser/Thr protein kinase family. STE20 subfamily.

It carries out the reaction L-seryl-[protein] + ATP = O-phospho-L-seryl-[protein] + ADP + H(+). The enzyme catalyses L-threonyl-[protein] + ATP = O-phospho-L-threonyl-[protein] + ADP + H(+). This is Mitogen-activated protein kinase kinase kinase 19 (Map3k19) from Mus musculus (Mouse).